A 388-amino-acid polypeptide reads, in one-letter code: Integrase (388 aa).

Residues 70–151 form the Core-binding (CB) domain; it reads YTVADAVNDW…CLNRAVKRAM (82 aa). In terms of domain architecture, Tyr recombinase spans 173–379; it reads RPSKALTFAQ…VIQTGAVVMD (207 aa). Residues R208, K249, R330, and H353 contribute to the active site. Y363 (O-(3'-phospho-DNA)-tyrosine intermediate) is an active-site residue.

Belongs to the 'phage' integrase family.

Its function is as follows. Required for integration of pSAM2. The protein is Integrase (int) of Streptomyces ambofaciens.